The following is a 66-amino-acid chain: Large ribosomal subunit protein uL29 (66 aa).

Belongs to the universal ribosomal protein uL29 family.

The polypeptide is Large ribosomal subunit protein uL29 (Chelativorans sp. (strain BNC1)).